We begin with the raw amino-acid sequence, 433 residues long: Succinate--CoA ligase [GDP-forming] subunit beta, mitochondrial (433 aa).

A mitochondrion-targeting transit peptide spans 1 to 38 (MASPVAIAAQAGKLLRERALRPLLAVRSQAGHLTPRRW). The region spanning 47 to 275 (KKLMSEHGVR…NAEFRQKDIF (229 aa)) is the ATP-grasp domain. Gln-58 is a binding site for GTP. Lys-67 carries the N6-acetyllysine; alternate modification. Lys-67 carries the N6-succinyllysine; alternate modification. Lys-74 carries the N6-acetyllysine modification. An N6-succinyllysine modification is found at Lys-79. 91-93 (GRG) contacts GTP. N6-acetyllysine occurs at positions 112, 133, and 140. GTP is bound at residue Leu-147. Ser-162 is subject to Phosphoserine. Lys-201 is subject to N6-acetyllysine. A Phosphoserine modification is found at Ser-217. An N6-acetyllysine mark is found at Lys-219 and Lys-228. The Mg(2+) site is built by Asn-244 and Asp-258. Lys-272 carries the post-translational modification N6-acetyllysine. Residue Asn-309 participates in substrate binding. The residue at position 339 (Lys-339) is an N6-succinyllysine. Lys-348 is subject to N6-acetyllysine. Residue 366–368 (GIV) coordinates substrate. N6-acetyllysine is present on residues Lys-387, Lys-407, and Lys-424.

This sequence belongs to the succinate/malate CoA ligase beta subunit family. GTP-specific subunit beta subfamily. In terms of assembly, heterodimer of an alpha and a beta subunit. The beta subunit determines specificity for GTP. Requires Mg(2+) as cofactor.

Its subcellular location is the mitochondrion. The catalysed reaction is GTP + succinate + CoA = succinyl-CoA + GDP + phosphate. Its pathway is carbohydrate metabolism; tricarboxylic acid cycle; succinate from succinyl-CoA (ligase route): step 1/1. Its function is as follows. GTP-specific succinyl-CoA synthetase functions in the citric acid cycle (TCA), coupling the hydrolysis of succinyl-CoA to the synthesis of GTP and thus represents the only step of substrate-level phosphorylation in the TCA. The beta subunit provides nucleotide specificity of the enzyme and binds the substrate succinate, while the binding sites for coenzyme A and phosphate are found in the alpha subunit. The sequence is that of Succinate--CoA ligase [GDP-forming] subunit beta, mitochondrial from Mus musculus (Mouse).